The primary structure comprises 123 residues: Ribosome-binding factor A (123 aa).

The protein belongs to the RbfA family. Monomer. Binds 30S ribosomal subunits, but not 50S ribosomal subunits or 70S ribosomes.

Its subcellular location is the cytoplasm. One of several proteins that assist in the late maturation steps of the functional core of the 30S ribosomal subunit. Associates with free 30S ribosomal subunits (but not with 30S subunits that are part of 70S ribosomes or polysomes). Required for efficient processing of 16S rRNA. May interact with the 5'-terminal helix region of 16S rRNA. The sequence is that of Ribosome-binding factor A from Koribacter versatilis (strain Ellin345).